Here is a 190-residue protein sequence, read N- to C-terminus: Threonylcarbamoyl-AMP synthase (190 aa).

The 184-residue stretch at 7–190 folds into the YrdC-like domain; the sequence is NFVLADIVRA…ALTGKRFRQG (184 aa).

Belongs to the SUA5 family. TsaC subfamily.

It is found in the cytoplasm. The enzyme catalyses L-threonine + hydrogencarbonate + ATP = L-threonylcarbamoyladenylate + diphosphate + H2O. Functionally, required for the formation of a threonylcarbamoyl group on adenosine at position 37 (t(6)A37) in tRNAs that read codons beginning with adenine. Catalyzes the conversion of L-threonine, HCO(3)(-)/CO(2) and ATP to give threonylcarbamoyl-AMP (TC-AMP) as the acyladenylate intermediate, with the release of diphosphate. This Yersinia pestis bv. Antiqua (strain Angola) protein is Threonylcarbamoyl-AMP synthase.